A 1003-amino-acid chain; its full sequence is Alpha-1,4 glucan phosphorylase L isozyme, chloroplastic/amyloplastic (1003 aa).

The transit peptide at 1–64 directs the protein to the chloroplast; it reads MASMTMRFHP…RRRSAFSVKC (64 aa). Disordered stretches follow at residues 71–91 and 526–593; these read KQKVKDQEVQQEAKTSPSSFA and SSEE…KKLP. The span at 537–553 shows a compositional bias: acidic residues; it reads GEEEETSKEGGEEEEEK. Positions 569–580 are enriched in basic and acidic residues; that stretch reads EVEKAIAEKDGT. K849 is subject to N6-(pyridoxal phosphate)lysine.

The protein belongs to the glycogen phosphorylase family. It depends on pyridoxal 5'-phosphate as a cofactor. As to expression, found predominantly in cotyledons and early seed coat.

It is found in the plastid. It localises to the chloroplast. The protein localises to the amyloplast. The enzyme catalyses [(1-&gt;4)-alpha-D-glucosyl](n) + phosphate = [(1-&gt;4)-alpha-D-glucosyl](n-1) + alpha-D-glucose 1-phosphate. Phosphorylase is an important allosteric enzyme in carbohydrate metabolism. Enzymes from different sources differ in their regulatory mechanisms and in their natural substrates. However, all known phosphorylases share catalytic and structural properties. Functionally, the L isoform exhibits higher affinity for unbranched substrates such as glucan-like amylose and maltodextrin. The sequence is that of Alpha-1,4 glucan phosphorylase L isozyme, chloroplastic/amyloplastic (PHO1) from Vicia faba (Broad bean).